Reading from the N-terminus, the 138-residue chain is uncharacterized protein (138 aa).

This is an uncharacterized protein from Saccharomyces cerevisiae (strain ATCC 204508 / S288c) (Baker's yeast).